Consider the following 856-residue polypeptide: Vomeronasal type-2 receptor 116 (856 aa).

A signal peptide spans 1–18 (MFTLIFLFLFLNIPLLVA). The Extracellular portion of the chain corresponds to 19–586 (DFISPRCFWK…VFLSYEEPLG (568 aa)). Asn94 carries an N-linked (GlcNAc...) asparagine glycan. Residues 587 to 607 (VALSLLSLCFSAFTTVVLGIF) traverse the membrane as a helical segment. Residues 608-622 (VKHHNTPIVKANNRT) are Cytoplasmic-facing. The helical transmembrane segment at 623-643 (LTYLLLISLIFCFLCPLLFIG) threads the bilayer. At 644–658 (HPNSATCILQQLTFG) the chain is on the extracellular side. The chain crosses the membrane as a helical span at residues 659–679 (VVFTVSLSTVLAKTITVVLAF). Residues 680–690 (KIIASQRMMKY) lie on the Cytoplasmic side of the membrane. The helical transmembrane segment at 691–711 (FLISGAINYIIPICILIQVIV) threads the bilayer. The Extracellular portion of the chain corresponds to 712-745 (CAVWLRASPPSVDIDAHSEHGQIIIVCHKGSVNA). Residues 746 to 766 (FYCVLGYLAILAFGSFTLAFL) form a helical membrane-spanning segment. Residues 767 to 778 (SRNLPGAFNEAK) are Cytoplasmic-facing. Residues 779 to 799 (SITFSMLVFCSVWVTFIPVYH) form a helical membrane-spanning segment. The Extracellular segment spans residues 800-806 (STKGKVM). Residues 807–827 (VAVEIFSTLASSAGMLGCIFV) form a helical membrane-spanning segment. At 828-856 (PKCYTILFRQDQNSLEMIRVKSSSNVHVS) the chain is on the cytoplasmic side.

The protein belongs to the G-protein coupled receptor 3 family. In terms of tissue distribution, expressed in the vomeronasal organ.

The protein localises to the cell membrane. Receptor for the Esp1 pheromone. Mediates the response to Esp1 which enhances female sexual receptive behavior (lordosis) upon male mounting, resulting in successful copulation. In Mus musculus (Mouse), this protein is Vomeronasal type-2 receptor 116.